The sequence spans 113 residues: MESLLNRLYDALGLDAPEDEPLLIIDDGIQVYFNESDHTLEMCCPFMPLPDDTLTLQHFLRLNYASAVTIGADADNTALVALYRLPQTSTEEEALTGFELFISNVKQLKEHYA.

It belongs to the IpgE/SigE chaperone family. As to quaternary structure, homodimer or higher-order oligomers.

It localises to the cytoplasm. Functionally, molecular chaperone required for SopB/SigD stabilization and secretion. In Salmonella typhi, this protein is Chaperone protein SigE (sigE).